The sequence spans 594 residues: UvrABC system protein C (594 aa).

The region spanning 13–99 is the GIY-YIG domain; it reads HSSGVYQYFD…IKQLKPKYNI (87 aa). The 36-residue stretch at 205 to 240 folds into the UVR domain; sequence DKLIKELELKMERLSNNLRFEEALIYRDRIAKIQKI.

It belongs to the UvrC family. As to quaternary structure, interacts with UvrB in an incision complex.

The protein localises to the cytoplasm. The UvrABC repair system catalyzes the recognition and processing of DNA lesions. UvrC both incises the 5' and 3' sides of the lesion. The N-terminal half is responsible for the 3' incision and the C-terminal half is responsible for the 5' incision. The chain is UvrABC system protein C from Helicobacter pylori (strain HPAG1).